A 373-amino-acid chain; its full sequence is PqqA peptide cyclase (373 aa).

The Radical SAM core domain occupies 9 to 224 (LTKPRWLLAE…QSYKEKVKGR (216 aa)). [4Fe-4S] cluster is bound by residues Cys23, Cys27, and Cys30.

It belongs to the radical SAM superfamily. PqqE family. As to quaternary structure, interacts with PqqD. The interaction is necessary for activity of PqqE. Requires [4Fe-4S] cluster as cofactor.

It carries out the reaction [PQQ precursor protein] + S-adenosyl-L-methionine = E-Y cross-linked-[PQQ precursor protein] + 5'-deoxyadenosine + L-methionine + H(+). The protein operates within cofactor biosynthesis; pyrroloquinoline quinone biosynthesis. Its function is as follows. Catalyzes the cross-linking of a glutamate residue and a tyrosine residue in the PqqA protein as part of the biosynthesis of pyrroloquinoline quinone (PQQ). The polypeptide is PqqA peptide cyclase (Methylococcus capsulatus (strain ATCC 33009 / NCIMB 11132 / Bath)).